The following is a 185-amino-acid chain: ATP synthase subunit b, chloroplastic (185 aa).

A helical membrane pass occupies residues 31–53 (IINITVVLGILIYFGKGVLSNLL).

This sequence belongs to the ATPase B chain family. As to quaternary structure, F-type ATPases have 2 components, F(1) - the catalytic core - and F(0) - the membrane proton channel. F(1) has five subunits: alpha(3), beta(3), gamma(1), delta(1), epsilon(1). F(0) has four main subunits: a(1), b(1), b'(1) and c(10-14). The alpha and beta chains form an alternating ring which encloses part of the gamma chain. F(1) is attached to F(0) by a central stalk formed by the gamma and epsilon chains, while a peripheral stalk is formed by the delta, b and b' chains.

The protein resides in the plastid. Its subcellular location is the chloroplast thylakoid membrane. Functionally, f(1)F(0) ATP synthase produces ATP from ADP in the presence of a proton or sodium gradient. F-type ATPases consist of two structural domains, F(1) containing the extramembraneous catalytic core and F(0) containing the membrane proton channel, linked together by a central stalk and a peripheral stalk. During catalysis, ATP synthesis in the catalytic domain of F(1) is coupled via a rotary mechanism of the central stalk subunits to proton translocation. Component of the F(0) channel, it forms part of the peripheral stalk, linking F(1) to F(0). In Gnetum parvifolium (Small-leaved jointfir), this protein is ATP synthase subunit b, chloroplastic.